The sequence spans 976 residues: Vacuolar membrane protease (976 aa).

Residues 1-15 lie on the Cytoplasmic side of the membrane; sequence MKLKSVFRSVLKYRK. The chain crosses the membrane as a helical span at residues 16 to 36; sequence TNLSLLLLITYSIITLLYIFD. Over 37-359 the chain is Vacuolar; it reads HERYKLNLPK…KFFVISAKTL (323 aa). N-linked (GlcNAc...) asparagine glycosylation is found at asparagine 96 and asparagine 121. Residues histidine 156 and aspartate 168 each coordinate Zn(2+). Asparagine 189 is a glycosylation site (N-linked (GlcNAc...) asparagine). Residue glutamate 200 is the Proton acceptor of the active site. Glutamate 201 contacts Zn(2+). Residue asparagine 217 is glycosylated (N-linked (GlcNAc...) asparagine). Zn(2+) is bound by residues glutamate 226 and histidine 300. Residues 360-380 form a helical membrane-spanning segment; that stretch reads FYWNCIFLLVSPVVAIGLYLI. Residues 381–392 lie on the Cytoplasmic side of the membrane; that stretch reads SRDRMTWKSYSW. Residues 393 to 412 traverse the membrane as a helical segment; that stretch reads LSWTRFPLSLAAGIIVQKLF. Topologically, residues 413 to 428 are vacuolar; that stretch reads SNDIIRSNPLTFSRNY. A helical transmembrane segment spans residues 429–449; it reads FWPISAFFTQVIFTSYVLINC. Residues 450–461 are Cytoplasmic-facing; sequence SNFFFPCADMKS. Residues 462–482 traverse the membrane as a helical segment; sequence LSIIELFIILWTILLFTSKLL. Residues 483–496 lie on the Vacuolar side of the membrane; the sequence is YSSDYRYTGLYPLS. The helical transmembrane segment at 497–517 threads the bilayer; it reads IFFLLSTIAAILRLLALALGM. The Cytoplasmic segment spans residues 518 to 627; it reads RTRKRLGREC…NSLKLEYTDY (110 aa). Residues 528 to 610 form a disordered region; the sequence is RDHHSNYSSH…PLLKGSNSME (83 aa). Residues 549-558 are compositionally biased toward polar residues; sequence NLEQPQDQLT. Residues 559–570 are compositionally biased toward low complexity; it reads SSQDDQASIQDD. Positions 582 to 601 are enriched in basic and acidic residues; sequence NVDEDHGMDSSSQQHDERVP. A helical membrane pass occupies residues 628 to 648; the sequence is AWIIQFLLIVPIPSFILFNSV. Topologically, residues 649 to 668 are vacuolar; that stretch reads DVIMDALNHTVQEGSKATFD. Asparagine 656 carries N-linked (GlcNAc...) asparagine glycosylation. The helical transmembrane segment at 669–689 threads the bilayer; the sequence is VLRFGMVGSILIALPILPFFY. Residues 690-692 are Cytoplasmic-facing; that stretch reads KVN. The helical transmembrane segment at 693-713 threads the bilayer; that stretch reads YITISLTALLFLISASKTLLV. The Vacuolar segment spans residues 714–976; the sequence is HPFTNSNPLK…LVIVKDAIIL (263 aa). Residues asparagine 768, asparagine 796, asparagine 811, asparagine 866, and asparagine 937 are each glycosylated (N-linked (GlcNAc...) asparagine).

This sequence belongs to the peptidase M28 family. It depends on Zn(2+) as a cofactor. N-glycosylated.

It localises to the vacuole membrane. Functionally, may be involved in vacuolar sorting and osmoregulation. This is Vacuolar membrane protease from Saccharomyces cerevisiae (strain ATCC 204508 / S288c) (Baker's yeast).